We begin with the raw amino-acid sequence, 379 residues long: ATP-sensitive inward rectifier potassium channel 10 (379 aa).

At 1-61 (MTSVAKVYYS…LKDLWTTFID (61 aa)) the chain is on the cytoplasmic side. Arg-36 is a 1,2-dioctanoyl-sn-glycero-3-phospho-(1D-myo-inositol-4,5-bisphosphate) binding site. Residues 62-88 (MQWRYKLLLFSATFAGTWFLFGVVWYL) form a helical membrane-spanning segment. Topologically, residues 89–114 (VAVAHGDLLELDPPANHTPCVVQVHT) are extracellular. A disulfide bond links Cys-108 and Cys-140. Positions 115–131 (LTGAFLFSLESQTTIGY) form an intramembrane region, discontinuously helical; Pore-forming. The short motif at 128-133 (TIGYGF) is the Selectivity filter element. At 132–140 (GFRYISEEC) the chain is on the extracellular side. A helical membrane pass occupies residues 141 to 166 (PLAIVLLIAQLVLTTILEIFITGTFL). Residues 167-379 (AKIARPKKRA…SALSVRISNV (213 aa)) are Cytoplasmic-facing. Lys-168, Arg-171, and Lys-173 together coordinate 1,2-dioctanoyl-sn-glycero-3-phospho-(1D-myo-inositol-4,5-bisphosphate). An ATP-binding site is contributed by 210 to 217 (GCQVTGKL).

The protein belongs to the inward rectifier-type potassium channel (TC 1.A.2.1) family. KCNJ10 subfamily. Homotetramer. In kidney cells, it forms heteromeric channels with Kir5.1/KCNJ16; this interaction is required for KCNJ16 localization to the basolateral membrane. Interacts with MAGI1, alone and possibly as a heteromer with KCNJ16; this interaction may facilitate KCNJ10/KCNJ16 potassium channel expression at the basolateral membrane in kidney cells. Interacts with PATJ. In terms of tissue distribution, expressed in kidney (at protein level). In the nephron, expressed in the distal convoluted tubule, the connecting tubule, the collecting duct and cortical thick ascending limbs.

It localises to the membrane. The protein localises to the basolateral cell membrane. The enzyme catalyses K(+)(in) = K(+)(out). With respect to regulation, channel activity is strongly regulated by variations of cytosolic pH; channels are activated by alkaline and inhibited by acidic pH values. Inhibited by Ba(2+) and Cs(+). Activated by phosphatidylinositol 4,5 biphosphate (PtdIns(4,5)P2). Functionally, may be responsible for potassium buffering action of glial cells in the brain. Inward rectifier potassium channels are characterized by a greater tendency to allow potassium to flow into the cell rather than out of it. Their voltage dependence is regulated by the concentration of extracellular potassium; as external potassium is raised, the voltage range of the channel opening shifts to more positive voltages. The inward rectification is mainly due to the blockage of outward current by internal magnesium. Can be blocked by extracellular barium and cesium. In the kidney, together with KCNJ16, mediates basolateral K(+) recycling in distal tubules; this process is critical for Na(+) reabsorption at the tubules. This is ATP-sensitive inward rectifier potassium channel 10 from Homo sapiens (Human).